Consider the following 179-residue polypeptide: NADH-quinone oxidoreductase subunit B 1 (179 aa).

[4Fe-4S] cluster contacts are provided by Cys-38, Cys-39, Cys-104, and Cys-133.

Belongs to the complex I 20 kDa subunit family. As to quaternary structure, NDH-1 is composed of 14 different subunits. Subunits NuoB, C, D, E, F, and G constitute the peripheral sector of the complex. [4Fe-4S] cluster is required as a cofactor.

Its subcellular location is the cell membrane. The catalysed reaction is a quinone + NADH + 5 H(+)(in) = a quinol + NAD(+) + 4 H(+)(out). Functionally, NDH-1 shuttles electrons from NADH, via FMN and iron-sulfur (Fe-S) centers, to quinones in the respiratory chain. The immediate electron acceptor for the enzyme in this species is believed to be ubiquinone. Couples the redox reaction to proton translocation (for every two electrons transferred, four hydrogen ions are translocated across the cytoplasmic membrane), and thus conserves the redox energy in a proton gradient. This Herpetosiphon aurantiacus (strain ATCC 23779 / DSM 785 / 114-95) protein is NADH-quinone oxidoreductase subunit B 1.